Reading from the N-terminus, the 231-residue chain is Tegument protein UL51 homolog (231 aa).

Residue Cys12 is the site of S-palmitoyl cysteine; by host attachment.

This sequence belongs to the herpesviridae UL51 family. In terms of assembly, oligomerizes. Interacts with U75; this interaction mediates U75 incorporation to virions. Post-translationally, phosphorylated. In terms of processing, palmitoylation is necessary for Golgi localization.

It is found in the virion tegument. It localises to the host cytoplasm. The protein resides in the host Golgi apparatus. In terms of biological role, plays several roles during the time course of infection, including egress of virus particles from the perinuclear space and secondary envelopment of cytoplasmic capsids that bud into specific trans-Golgi network (TGN)-derived membranes. The protein is Tegument protein UL51 homolog (U44) of Human herpesvirus 6B (strain Z29) (HHV-6 variant B).